A 249-amino-acid chain; its full sequence is Coproheme decarboxylase (249 aa).

Residues Arg131, 145 to 149 (YPMDK), His172, and Gln185 each bind Fe-coproporphyrin III. The active site involves Tyr145.

This sequence belongs to the ChdC family. Type 1 subfamily. Requires Fe-coproporphyrin III as cofactor.

The catalysed reaction is Fe-coproporphyrin III + 2 H2O2 + 2 H(+) = heme b + 2 CO2 + 4 H2O. It catalyses the reaction Fe-coproporphyrin III + H2O2 + H(+) = harderoheme III + CO2 + 2 H2O. The enzyme catalyses harderoheme III + H2O2 + H(+) = heme b + CO2 + 2 H2O. The protein operates within porphyrin-containing compound metabolism; protoheme biosynthesis. Involved in coproporphyrin-dependent heme b biosynthesis. Catalyzes the decarboxylation of Fe-coproporphyrin III (coproheme) to heme b (protoheme IX), the last step of the pathway. The reaction occurs in a stepwise manner with a three-propionate intermediate. The polypeptide is Coproheme decarboxylase (Staphylococcus epidermidis (strain ATCC 12228 / FDA PCI 1200)).